A 350-amino-acid polypeptide reads, in one-letter code: uncharacterized protein (350 aa).

Residues Asp214, Asp225, His289, Glu318, and Glu332 each contribute to the Mn(2+) site.

This sequence belongs to the peptidase M24B family. Requires Mn(2+) as cofactor.

This is an uncharacterized protein from Staphylococcus saprophyticus subsp. saprophyticus (strain ATCC 15305 / DSM 20229 / NCIMB 8711 / NCTC 7292 / S-41).